An 861-amino-acid chain; its full sequence is Bifunctional uridylyltransferase/uridylyl-removing enzyme (861 aa).

Residues Met-1–Arg-321 are uridylyltransferase. The uridylyl-removing stretch occupies residues Leu-322–Thr-678. The HD domain occupies Val-440–Leu-562. ACT domains lie at Glu-679 to Arg-760 and Gln-788 to Tyr-861.

The protein belongs to the GlnD family. The cofactor is Mg(2+).

The enzyme catalyses [protein-PII]-L-tyrosine + UTP = [protein-PII]-uridylyl-L-tyrosine + diphosphate. It catalyses the reaction [protein-PII]-uridylyl-L-tyrosine + H2O = [protein-PII]-L-tyrosine + UMP + H(+). With respect to regulation, uridylyltransferase (UTase) activity is inhibited by glutamine, while glutamine activates uridylyl-removing (UR) activity. Functionally, modifies, by uridylylation and deuridylylation, the PII regulatory proteins (GlnB and homologs), in response to the nitrogen status of the cell that GlnD senses through the glutamine level. Under low glutamine levels, catalyzes the conversion of the PII proteins and UTP to PII-UMP and PPi, while under higher glutamine levels, GlnD hydrolyzes PII-UMP to PII and UMP (deuridylylation). Thus, controls uridylylation state and activity of the PII proteins, and plays an important role in the regulation of nitrogen assimilation and metabolism. The sequence is that of Bifunctional uridylyltransferase/uridylyl-removing enzyme from Legionella pneumophila (strain Lens).